We begin with the raw amino-acid sequence, 285 residues long: NADPH-dependent 7-cyano-7-deazaguanine reductase (285 aa).

91–93 (IES) contributes to the substrate binding site. 93 to 94 (SK) serves as a coordination point for NADPH. Cysteine 191 (thioimide intermediate) is an active-site residue. Residue aspartate 198 is the Proton donor of the active site. 230 to 231 (HE) is a binding site for substrate. 259–260 (RG) contributes to the NADPH binding site.

Belongs to the GTP cyclohydrolase I family. QueF type 2 subfamily. In terms of assembly, homodimer.

The protein localises to the cytoplasm. The enzyme catalyses 7-aminomethyl-7-carbaguanine + 2 NADP(+) = 7-cyano-7-deazaguanine + 2 NADPH + 3 H(+). It functions in the pathway tRNA modification; tRNA-queuosine biosynthesis. Functionally, catalyzes the NADPH-dependent reduction of 7-cyano-7-deazaguanine (preQ0) to 7-aminomethyl-7-deazaguanine (preQ1). The protein is NADPH-dependent 7-cyano-7-deazaguanine reductase of Legionella pneumophila (strain Paris).